The chain runs to 258 residues: Tryptophan synthase alpha chain (258 aa).

Residues glutamate 52 and aspartate 63 each act as proton acceptor in the active site.

The protein belongs to the TrpA family. Tetramer of two alpha and two beta chains.

It catalyses the reaction (1S,2R)-1-C-(indol-3-yl)glycerol 3-phosphate + L-serine = D-glyceraldehyde 3-phosphate + L-tryptophan + H2O. Its pathway is amino-acid biosynthesis; L-tryptophan biosynthesis; L-tryptophan from chorismate: step 5/5. Functionally, the alpha subunit is responsible for the aldol cleavage of indoleglycerol phosphate to indole and glyceraldehyde 3-phosphate. The protein is Tryptophan synthase alpha chain of Streptococcus pneumoniae (strain 70585).